We begin with the raw amino-acid sequence, 305 residues long: MRLVFAGTPRAAVPSLVRLHASGHEVALVVTRADAPTGRKRQLTPSPVAREAEGLGIPTLRTNRLDEEATARIAAVGAGLGVIVAYGGLVREPLLSTPARGWINLHFSLLPRWRGAAPVQRSIMAGETVTGASVFRLERGMDTGPVFAVEERPTGAHETAGDVLHALAMQGADLLVRTVDGIAAGSAVARPQEGEPTLAPKTSIADGRIDWARPADAVLAQIRGVTPEPGAFTSVDDVRVKVHRAAELRDAAPLDPGRIESVGGAVMVGTTSHPVELIQVQPAGKKPMPAADWWRGVTTRDITAR.

Residue 108 to 111 coordinates (6S)-5,6,7,8-tetrahydrofolate; that stretch reads SLLP.

This sequence belongs to the Fmt family.

The catalysed reaction is L-methionyl-tRNA(fMet) + (6R)-10-formyltetrahydrofolate = N-formyl-L-methionyl-tRNA(fMet) + (6S)-5,6,7,8-tetrahydrofolate + H(+). Its function is as follows. Attaches a formyl group to the free amino group of methionyl-tRNA(fMet). The formyl group appears to play a dual role in the initiator identity of N-formylmethionyl-tRNA by promoting its recognition by IF2 and preventing the misappropriation of this tRNA by the elongation apparatus. The chain is Methionyl-tRNA formyltransferase from Clavibacter michiganensis subsp. michiganensis (strain NCPPB 382).